The sequence spans 180 residues: Centromere protein M (180 aa).

In terms of assembly, component of the CENPA-NAC complex, at least composed of CENPA, CENPC, CENPH, CENPM, CENPN, CENPT and CENPU. The CENPA-NAC complex interacts with the CENPA-CAD complex, composed of CENPI, CENPK, CENPL, CENPO, CENPP, CENPQ, CENPR and CENPS.

The protein localises to the nucleus. It localises to the cytoplasm. Its subcellular location is the chromosome. The protein resides in the centromere. It is found in the kinetochore. Component of the CENPA-NAC (nucleosome-associated) complex, a complex that plays a central role in assembly of kinetochore proteins, mitotic progression and chromosome segregation. The CENPA-NAC complex recruits the CENPA-CAD (nucleosome distal) complex and may be involved in incorporation of newly synthesized CENPA into centromeres. This chain is Centromere protein M (CENPM), found in Bos taurus (Bovine).